Consider the following 53-residue polypeptide: Rubredoxin 3 (53 aa).

A Rubredoxin-like domain is found at 1-53; it reads MQKWVCVPCGYEYDPADGDPENGIEPGTAFEDLPEDWVCPVCGVDKSFFEPVS. Fe cation-binding residues include Cys-6, Cys-9, Cys-39, and Cys-42.

This sequence belongs to the rubredoxin family. Monomer. The cofactor is Fe(3+).

Its function is as follows. Functions as an electron acceptor for pyruvate ferredoxin oxidoreductase (PFOR). This Chlorobaculum tepidum (strain ATCC 49652 / DSM 12025 / NBRC 103806 / TLS) (Chlorobium tepidum) protein is Rubredoxin 3 (rub3).